A 363-amino-acid chain; its full sequence is UDP-N-acetylglucosamine--N-acetylmuramyl-(pentapeptide) pyrophosphoryl-undecaprenol N-acetylglucosamine transferase (363 aa).

UDP-N-acetyl-alpha-D-glucosamine-binding positions include 12 to 14 (TAG), Arg166, Ser196, and Gln291.

It belongs to the glycosyltransferase 28 family. MurG subfamily.

It localises to the cell inner membrane. The enzyme catalyses di-trans,octa-cis-undecaprenyl diphospho-N-acetyl-alpha-D-muramoyl-L-alanyl-D-glutamyl-meso-2,6-diaminopimeloyl-D-alanyl-D-alanine + UDP-N-acetyl-alpha-D-glucosamine = di-trans,octa-cis-undecaprenyl diphospho-[N-acetyl-alpha-D-glucosaminyl-(1-&gt;4)]-N-acetyl-alpha-D-muramoyl-L-alanyl-D-glutamyl-meso-2,6-diaminopimeloyl-D-alanyl-D-alanine + UDP + H(+). It functions in the pathway cell wall biogenesis; peptidoglycan biosynthesis. In terms of biological role, cell wall formation. Catalyzes the transfer of a GlcNAc subunit on undecaprenyl-pyrophosphoryl-MurNAc-pentapeptide (lipid intermediate I) to form undecaprenyl-pyrophosphoryl-MurNAc-(pentapeptide)GlcNAc (lipid intermediate II). This chain is UDP-N-acetylglucosamine--N-acetylmuramyl-(pentapeptide) pyrophosphoryl-undecaprenol N-acetylglucosamine transferase, found in Legionella pneumophila (strain Paris).